The primary structure comprises 1385 residues: DNA-directed RNA polymerase subunit beta (1385 aa).

It belongs to the RNA polymerase beta chain family. The RNAP catalytic core consists of 2 alpha, 1 beta, 1 beta' and 1 omega subunit. When a sigma factor is associated with the core the holoenzyme is formed, which can initiate transcription.

The catalysed reaction is RNA(n) + a ribonucleoside 5'-triphosphate = RNA(n+1) + diphosphate. Functionally, DNA-dependent RNA polymerase catalyzes the transcription of DNA into RNA using the four ribonucleoside triphosphates as substrates. This is DNA-directed RNA polymerase subunit beta from Jannaschia sp. (strain CCS1).